Consider the following 319-residue polypeptide: 4-diphosphocytidyl-2-C-methyl-D-erythritol kinase (319 aa).

The active site involves Lys18. 103-113 provides a ligand contact to ATP; that stretch reads PIGAGLAGGST. Asp145 is an active-site residue.

It belongs to the GHMP kinase family. IspE subfamily.

It catalyses the reaction 4-CDP-2-C-methyl-D-erythritol + ATP = 4-CDP-2-C-methyl-D-erythritol 2-phosphate + ADP + H(+). It functions in the pathway isoprenoid biosynthesis; isopentenyl diphosphate biosynthesis via DXP pathway; isopentenyl diphosphate from 1-deoxy-D-xylulose 5-phosphate: step 3/6. In terms of biological role, catalyzes the phosphorylation of the position 2 hydroxy group of 4-diphosphocytidyl-2C-methyl-D-erythritol. The sequence is that of 4-diphosphocytidyl-2-C-methyl-D-erythritol kinase from Prochlorococcus marinus (strain NATL2A).